We begin with the raw amino-acid sequence, 479 residues long: GTPase Der (479 aa).

EngA-type G domains are found at residues 3-167 (FKVA…GEAR) and 208-383 (MRIA…KVWN). GTP is bound by residues 9–16 (GRPNVGKS), 56–60 (DTAGF), 119–122 (NKAE), 214–221 (GRPNAGKS), 261–265 (DTAGM), and 326–329 (NKWD). The 85-residue stretch at 384 to 468 (SRVSTGKLNR…PIRIALRTSD (85 aa)) folds into the KH-like domain.

Belongs to the TRAFAC class TrmE-Era-EngA-EngB-Septin-like GTPase superfamily. EngA (Der) GTPase family. Associates with the 50S ribosomal subunit.

Functionally, GTPase that plays an essential role in the late steps of ribosome biogenesis. In Mesorhizobium japonicum (strain LMG 29417 / CECT 9101 / MAFF 303099) (Mesorhizobium loti (strain MAFF 303099)), this protein is GTPase Der.